The sequence spans 650 residues: Acetyl-coenzyme A synthetase (650 aa).

CoA contacts are provided by residues 191-194 (RAGR), T311, and N335. ATP is bound by residues 387-389 (GEP), 411-416 (DTWWQT), D500, and R515. A CoA-binding site is contributed by S523. R526 contacts ATP. Mg(2+) contacts are provided by V537, H539, and V542. R584 provides a ligand contact to CoA. At K609 the chain carries N6-acetyllysine.

The protein belongs to the ATP-dependent AMP-binding enzyme family. Mg(2+) serves as cofactor. In terms of processing, acetylated. Deacetylation by the SIR2-homolog deacetylase activates the enzyme.

It catalyses the reaction acetate + ATP + CoA = acetyl-CoA + AMP + diphosphate. Functionally, catalyzes the conversion of acetate into acetyl-CoA (AcCoA), an essential intermediate at the junction of anabolic and catabolic pathways. AcsA undergoes a two-step reaction. In the first half reaction, AcsA combines acetate with ATP to form acetyl-adenylate (AcAMP) intermediate. In the second half reaction, it can then transfer the acetyl group from AcAMP to the sulfhydryl group of CoA, forming the product AcCoA. This Shewanella pealeana (strain ATCC 700345 / ANG-SQ1) protein is Acetyl-coenzyme A synthetase.